The primary structure comprises 638 residues: Chaperone protein DnaK (638 aa).

Phosphothreonine; by autocatalysis is present on Thr198. The segment at 602–638 (QAKSQAQGGEEAQAKDAGQSNDDVVDAEFEEVKDDKK) is disordered. Residues 624–638 (DVVDAEFEEVKDDKK) are compositionally biased toward acidic residues.

It belongs to the heat shock protein 70 family.

Its function is as follows. Acts as a chaperone. The polypeptide is Chaperone protein DnaK (Shewanella denitrificans (strain OS217 / ATCC BAA-1090 / DSM 15013)).